Consider the following 173-residue polypeptide: Mesencephalic astrocyte-derived neurotrophic factor homolog (173 aa).

The first 22 residues, 1–22 (MKTTHLVLVLCFLAGVAQTTLA), serve as a signal peptide directing secretion. 4 disulfide bridges follow: C28-C114, C31-C103, C61-C72, and C148-C151.

This sequence belongs to the ARMET family.

It localises to the secreted. In terms of biological role, required during the maturation of the embryonic nervous system for maintenance of neuronal and cuticular connectivity. Essential for maintenance of dopaminergic neurons and dopamine levels. This Drosophila persimilis (Fruit fly) protein is Mesencephalic astrocyte-derived neurotrophic factor homolog.